The sequence spans 113 residues: Pro-corazonin (113 aa).

The signal sequence occupies residues 1-19; it reads MATNITMFLIVITLTSVAA. A Pyrrolidone carboxylic acid modification is found at glutamine 20. The residue at position 30 (asparagine 30) is an Asparagine amide. A disordered region spans residues 74–96; it reads LGPCDTSKTRSTTNPSDTNTSAV. Residues 82-96 are compositionally biased toward polar residues; that stretch reads TRSTTNPSDTNTSAV.

This sequence belongs to the corazonin family. Four pairs of lateral neurosecretory cells in the brains of late instar larvae, pupae and adults.

The protein resides in the secreted. Cardioactive peptide. Corazonin is probably involved in the physiological regulation of the heart beat. This Galleria mellonella (Greater wax moth) protein is Pro-corazonin.